The following is a 240-amino-acid chain: Phosphoribosylaminoimidazole-succinocarboxamide synthase (240 aa).

This sequence belongs to the SAICAR synthetase family.

It carries out the reaction 5-amino-1-(5-phospho-D-ribosyl)imidazole-4-carboxylate + L-aspartate + ATP = (2S)-2-[5-amino-1-(5-phospho-beta-D-ribosyl)imidazole-4-carboxamido]succinate + ADP + phosphate + 2 H(+). The protein operates within purine metabolism; IMP biosynthesis via de novo pathway; 5-amino-1-(5-phospho-D-ribosyl)imidazole-4-carboxamide from 5-amino-1-(5-phospho-D-ribosyl)imidazole-4-carboxylate: step 1/2. The chain is Phosphoribosylaminoimidazole-succinocarboxamide synthase from Limosilactobacillus fermentum (strain NBRC 3956 / LMG 18251) (Lactobacillus fermentum).